A 98-amino-acid chain; its full sequence is Thrombin-like enzyme cerastotin (98 aa).

The Peptidase S1 domain maps to 1–98 (VIGGAECNIN…IKKPVNGSTH (98 aa)). Residues His41 and Asp85 each act as charge relay system in the active site. The N-linked (GlcNAc...) asparagine glycan is linked to Asn94.

It belongs to the peptidase S1 family. Snake venom subfamily. In terms of assembly, monomer. In terms of tissue distribution, expressed by the venom gland.

It is found in the secreted. Its activity is regulated as follows. Inhibited by PMSF. Its function is as follows. Thrombin-like snake venom serine protease that preferentially cleaves the alpha-chain of fibrinogen (FGA). Induce platelet aggregation in the presence of exogenous fibrinogen. Possesses esterase and amidolytic activities. The sequence is that of Thrombin-like enzyme cerastotin from Cerastes cerastes (Horned desert viper).